The primary structure comprises 130 residues: Lysozyme C (130 aa).

In terms of domain architecture, C-type lysozyme spans 1–130; sequence KVWERCALAR…VEQYVEGCDL (130 aa). 4 cysteine pairs are disulfide-bonded: Cys6-Cys128, Cys30-Cys116, Cys65-Cys81, and Cys77-Cys95. Active-site residues include Glu35 and Asp53.

It belongs to the glycosyl hydrolase 22 family. As to quaternary structure, monomer.

It carries out the reaction Hydrolysis of (1-&gt;4)-beta-linkages between N-acetylmuramic acid and N-acetyl-D-glucosamine residues in a peptidoglycan and between N-acetyl-D-glucosamine residues in chitodextrins.. Functionally, lysozymes have primarily a bacteriolytic function; those in tissues and body fluids are associated with the monocyte-macrophage system and enhance the activity of immunoagents. This Camelus dromedarius (Dromedary) protein is Lysozyme C (LYZ).